Consider the following 118-residue polypeptide: Large ribosomal subunit protein bL20 (118 aa).

Belongs to the bacterial ribosomal protein bL20 family.

Binds directly to 23S ribosomal RNA and is necessary for the in vitro assembly process of the 50S ribosomal subunit. It is not involved in the protein synthesizing functions of that subunit. This Gluconobacter oxydans (strain 621H) (Gluconobacter suboxydans) protein is Large ribosomal subunit protein bL20.